The following is a 137-amino-acid chain: Holo-[acyl-carrier-protein] synthase (137 aa).

Mg(2+)-binding residues include Asp-8 and Glu-58.

This sequence belongs to the P-Pant transferase superfamily. AcpS family. Mg(2+) serves as cofactor.

It is found in the cytoplasm. The enzyme catalyses apo-[ACP] + CoA = holo-[ACP] + adenosine 3',5'-bisphosphate + H(+). Functionally, transfers the 4'-phosphopantetheine moiety from coenzyme A to a Ser of acyl-carrier-protein. The sequence is that of Holo-[acyl-carrier-protein] synthase from Lactobacillus delbrueckii subsp. bulgaricus (strain ATCC BAA-365 / Lb-18).